A 342-amino-acid chain; its full sequence is Probable alcohol acetyltransferase (342 aa).

A mitochondrion-targeting transit peptide spans 1 to 38 (MMILGKAGILAQYGTIYVRQNTIRNNLSSCIFKQSLCA). Residues 39–46 (FHSLAKVL) constitute a propeptide, removed in mature form. The AB hydrolase-1 domain occupies 75-326 (PPIIILHGLF…AGHWVNAEKP (252 aa)). Residues Ser152 and His319 each act as charge relay system in the active site.

This sequence belongs to the AB hydrolase superfamily. Processed by both the mitochondrial processing peptidase (MPP) and the mitochondrial octapeptidyl aminopeptidase (OCT1).

The protein resides in the mitochondrion. Functionally, probable alcohol acetyltransferase that uses acetyl-CoA to synthesize acetate esters from various alcohols. Not involved in the synthesis of ethyl acetate. This chain is Probable alcohol acetyltransferase (IMO32), found in Saccharomyces cerevisiae (strain ATCC 204508 / S288c) (Baker's yeast).